Consider the following 321-residue polypeptide: Fe-S cluster assembly protein DRE2 (321 aa).

Residues 1-131 (MERMLLLSPP…KPDFGPENIV (131 aa)) are N-terminal SAM-like domain. A linker region spans residues 132–213 (PLKLGKRKPV…EETLLDGEDM (82 aa)). Cys223, Cys234, Cys237, and Cys239 together coordinate [2Fe-2S] cluster. Residues 223-239 (CRPKAGKRRRACKDCTC) are fe-S binding site A. Positions 284, 287, 295, and 298 each coordinate [4Fe-4S] cluster. 2 short sequence motifs (cx2C motif) span residues 284-287 (CGNC) and 295-298 (CDGC). Residues 284 to 298 (CGNCALGDAFRCDGC) are fe-S binding site B.

The protein belongs to the anamorsin family. Monomer. Interacts with TAH18. Interacts with MIA40. The cofactor is [2Fe-2S] cluster. It depends on [4Fe-4S] cluster as a cofactor.

The protein localises to the cytoplasm. Its subcellular location is the mitochondrion intermembrane space. Its function is as follows. Component of the cytosolic iron-sulfur (Fe-S) protein assembly (CIA) machinery required for the maturation of extramitochondrial Fe-S proteins. Part of an electron transfer chain functioning in an early step of cytosolic Fe-S biogenesis, facilitating the de novo assembly of a [4Fe-4S] cluster on the scaffold complex CFD1-NBP35. Electrons are transferred to DRE2 from NADPH via the FAD- and FMN-containing protein TAH18. TAH18-DRE2 are also required for the assembly of the diferric tyrosyl radical cofactor of ribonucleotide reductase (RNR), probably by providing electrons for reduction during radical cofactor maturation in the catalytic small subunit RNR2. This is Fe-S cluster assembly protein DRE2 from Coccidioides immitis (strain RS) (Valley fever fungus).